The following is a 598-amino-acid chain: UvrABC system protein C (598 aa).

Residues 14 to 91 (DSPGCYLHKD…IQKNMPKYNI (78 aa)) enclose the GIY-YIG domain. In terms of domain architecture, UVR spans 196 to 231 (DKIIEDLRSKMLAASEEMAFERAAEYRDLISGIATM).

This sequence belongs to the UvrC family. In terms of assembly, interacts with UvrB in an incision complex.

The protein localises to the cytoplasm. In terms of biological role, the UvrABC repair system catalyzes the recognition and processing of DNA lesions. UvrC both incises the 5' and 3' sides of the lesion. The N-terminal half is responsible for the 3' incision and the C-terminal half is responsible for the 5' incision. In Streptococcus pyogenes serotype M28 (strain MGAS6180), this protein is UvrABC system protein C.